We begin with the raw amino-acid sequence, 420 residues long: Gamma-glutamyl phosphate reductase (420 aa).

This sequence belongs to the gamma-glutamyl phosphate reductase family.

It is found in the cytoplasm. The enzyme catalyses L-glutamate 5-semialdehyde + phosphate + NADP(+) = L-glutamyl 5-phosphate + NADPH + H(+). It functions in the pathway amino-acid biosynthesis; L-proline biosynthesis; L-glutamate 5-semialdehyde from L-glutamate: step 2/2. In terms of biological role, catalyzes the NADPH-dependent reduction of L-glutamate 5-phosphate into L-glutamate 5-semialdehyde and phosphate. The product spontaneously undergoes cyclization to form 1-pyrroline-5-carboxylate. This Streptococcus pneumoniae (strain CGSP14) protein is Gamma-glutamyl phosphate reductase.